Reading from the N-terminus, the 438-residue chain is Serine hydroxymethyltransferase 1 (438 aa).

(6S)-5,6,7,8-tetrahydrofolate is bound by residues Leu-130 and 134–136; that span reads GHL. Lys-239 carries the N6-(pyridoxal phosphate)lysine modification.

It belongs to the SHMT family. In terms of assembly, homodimer. Pyridoxal 5'-phosphate is required as a cofactor.

The protein resides in the cytoplasm. It catalyses the reaction (6R)-5,10-methylene-5,6,7,8-tetrahydrofolate + glycine + H2O = (6S)-5,6,7,8-tetrahydrofolate + L-serine. The protein operates within one-carbon metabolism; tetrahydrofolate interconversion. It participates in amino-acid biosynthesis; glycine biosynthesis; glycine from L-serine: step 1/1. Catalyzes the reversible interconversion of serine and glycine with tetrahydrofolate (THF) serving as the one-carbon carrier. This reaction serves as the major source of one-carbon groups required for the biosynthesis of purines, thymidylate, methionine, and other important biomolecules. Also exhibits THF-independent aldolase activity toward beta-hydroxyamino acids, producing glycine and aldehydes, via a retro-aldol mechanism. Thus, is able to catalyze the cleavage of L-allo-threonine. This chain is Serine hydroxymethyltransferase 1, found in Mycobacterium tuberculosis (strain ATCC 25618 / H37Rv).